Reading from the N-terminus, the 123-residue chain is Alpha-lactalbumin A (123 aa).

In terms of domain architecture, C-type lysozyme spans 1-123 (KQFTKCELSQ…KLEQWLCEEL (123 aa)). 4 disulfide bridges follow: C6–C120, C28–C111, C61–C77, and C73–C91. Ca(2+) is bound by residues K79, D82, D84, D87, and D88.

The protein belongs to the glycosyl hydrolase 22 family. In terms of assembly, lactose synthase (LS) is a heterodimer of a catalytic component, beta1,4-galactosyltransferase (beta4Gal-T1) and a regulatory component, alpha-lactalbumin (LA). As to expression, mammary gland specific. Secreted in milk.

It localises to the secreted. Regulatory subunit of lactose synthase, changes the substrate specificity of galactosyltransferase in the mammary gland making glucose a good acceptor substrate for this enzyme. This enables LS to synthesize lactose, the major carbohydrate component of milk. In other tissues, galactosyltransferase transfers galactose onto the N-acetylglucosamine of the oligosaccharide chains in glycoproteins. In Equus caballus (Horse), this protein is Alpha-lactalbumin A.